We begin with the raw amino-acid sequence, 329 residues long: Anthranilate phosphoribosyltransferase (329 aa).

5-phospho-alpha-D-ribose 1-diphosphate-binding positions include Gly-78, 81 to 82 (GD), 88 to 91 (NLST), 106 to 114 (KHGNRAASS), and Ser-118. Gly-78 is a binding site for anthranilate. Mg(2+) is bound at residue Ser-90. Position 109 (Asn-109) interacts with anthranilate. Arg-164 lines the anthranilate pocket. Mg(2+) is bound by residues Asp-221 and Glu-222.

It belongs to the anthranilate phosphoribosyltransferase family. As to quaternary structure, homodimer. Mg(2+) is required as a cofactor.

It catalyses the reaction N-(5-phospho-beta-D-ribosyl)anthranilate + diphosphate = 5-phospho-alpha-D-ribose 1-diphosphate + anthranilate. Its pathway is amino-acid biosynthesis; L-tryptophan biosynthesis; L-tryptophan from chorismate: step 2/5. In terms of biological role, catalyzes the transfer of the phosphoribosyl group of 5-phosphorylribose-1-pyrophosphate (PRPP) to anthranilate to yield N-(5'-phosphoribosyl)-anthranilate (PRA). In Thermus thermophilus (strain ATCC BAA-163 / DSM 7039 / HB27), this protein is Anthranilate phosphoribosyltransferase.